The following is a 100-amino-acid chain: Putative ESAT-6-like protein Y (100 aa).

It belongs to the WXG100 family.

This is Putative ESAT-6-like protein Y from Mycobacterium leprae (strain TN).